Consider the following 437-residue polypeptide: UDP-N-acetylmuramate--L-alanine ligase (437 aa).

114-120 contacts ATP; that stretch reads GTHGKTS.

Belongs to the MurCDEF family.

The protein localises to the cytoplasm. It catalyses the reaction UDP-N-acetyl-alpha-D-muramate + L-alanine + ATP = UDP-N-acetyl-alpha-D-muramoyl-L-alanine + ADP + phosphate + H(+). The protein operates within cell wall biogenesis; peptidoglycan biosynthesis. Its function is as follows. Cell wall formation. This Lactobacillus acidophilus (strain ATCC 700396 / NCK56 / N2 / NCFM) protein is UDP-N-acetylmuramate--L-alanine ligase.